The sequence spans 347 residues: Phosphoribosylformylglycinamidine cyclo-ligase (347 aa).

Belongs to the AIR synthase family.

The protein resides in the cytoplasm. The catalysed reaction is 2-formamido-N(1)-(5-O-phospho-beta-D-ribosyl)acetamidine + ATP = 5-amino-1-(5-phospho-beta-D-ribosyl)imidazole + ADP + phosphate + H(+). The protein operates within purine metabolism; IMP biosynthesis via de novo pathway; 5-amino-1-(5-phospho-D-ribosyl)imidazole from N(2)-formyl-N(1)-(5-phospho-D-ribosyl)glycinamide: step 2/2. This Yersinia pseudotuberculosis serotype O:1b (strain IP 31758) protein is Phosphoribosylformylglycinamidine cyclo-ligase.